The chain runs to 467 residues: Asparagine--tRNA ligase (467 aa).

This sequence belongs to the class-II aminoacyl-tRNA synthetase family. Homodimer.

The protein resides in the cytoplasm. The enzyme catalyses tRNA(Asn) + L-asparagine + ATP = L-asparaginyl-tRNA(Asn) + AMP + diphosphate + H(+). The chain is Asparagine--tRNA ligase from Mannheimia succiniciproducens (strain KCTC 0769BP / MBEL55E).